The sequence spans 90 residues: Non-structural protein NS-S (90 aa).

It belongs to the hantavirus NS-S protein family.

It is found in the host cytoplasm. The protein resides in the host perinuclear region. In terms of biological role, antagonizes host type-I IFN signaling pathway. This chain is Non-structural protein NS-S (N), found in Homo sapiens (Human).